A 186-amino-acid polypeptide reads, in one-letter code: Ribosome maturation factor RimM (186 aa).

The PRC barrel domain maps to 100-182 (NEGEYHVSDL…RIEINPPVGL (83 aa)).

The protein belongs to the RimM family. In terms of assembly, binds ribosomal protein uS19.

The protein localises to the cytoplasm. In terms of biological role, an accessory protein needed during the final step in the assembly of 30S ribosomal subunit, possibly for assembly of the head region. Essential for efficient processing of 16S rRNA. May be needed both before and after RbfA during the maturation of 16S rRNA. It has affinity for free ribosomal 30S subunits but not for 70S ribosomes. The polypeptide is Ribosome maturation factor RimM (Rippkaea orientalis (strain PCC 8801 / RF-1) (Cyanothece sp. (strain PCC 8801))).